The following is a 440-amino-acid chain: Chromosome partition protein MukF (440 aa).

The segment at 208–236 (LSETSGTLRELQDTLEAAGDKLQANLLRI) is leucine-zipper.

The protein belongs to the MukF family. As to quaternary structure, interacts, and probably forms a ternary complex, with MukE and MukB via its C-terminal region. The complex formation is stimulated by calcium or magnesium. It is required for an interaction between MukE and MukB.

The protein resides in the cytoplasm. It is found in the nucleoid. In terms of biological role, involved in chromosome condensation, segregation and cell cycle progression. May participate in facilitating chromosome segregation by condensation DNA from both sides of a centrally located replisome during cell division. Not required for mini-F plasmid partitioning. Probably acts via its interaction with MukB and MukE. Overexpression results in anucleate cells. It has a calcium binding activity. The polypeptide is Chromosome partition protein MukF (Yersinia enterocolitica serotype O:8 / biotype 1B (strain NCTC 13174 / 8081)).